The chain runs to 547 residues: DEAD-box ATP-dependent RNA helicase 31 (547 aa).

A compositionally biased stretch (acidic residues) spans 1 to 34 (MFDFGLSEDDSELGEVDEDDGPSGFEDDLFDDEG). Positions 1 to 74 (MFDFGLSEDD…HTRESGGGDS (74 aa)) are disordered. The segment covering 53-70 (IKGEPIDQEGVVHTRESG) has biased composition (basic and acidic residues). The Q motif motif lies at 79 to 107 (TRFDECSLSPLTLKGVKAAGYERMTAVQE). A Helicase ATP-binding domain is found at 110-293 (LPIILKGKDV…HIAMKRDLEF (184 aa)). 123–130 (AKTGTGKT) contributes to the ATP binding site. The short motif at 241-244 (DEAD) is the DEAD box element. The 152-residue stretch at 327–478 (LLTDHISENV…TKRKVEKALA (152 aa)) folds into the Helicase C-terminal domain.

Belongs to the DEAD box helicase family.

The catalysed reaction is ATP + H2O = ADP + phosphate + H(+). The polypeptide is DEAD-box ATP-dependent RNA helicase 31 (Oryza sativa subsp. japonica (Rice)).